The primary structure comprises 471 residues: MTLPSKENFSEWYHEVIQTAEIMDVRYPVKGLYVWFPFGFKIRQLVYSKLREIMDREHDEVYFPALIPETELGKEGEHIKGFEDEVYWITHGGLTPLDVKLALRPTSETAMYPMFRLWVRNHADLPLKVYQIVNTFRYETKHTRPLIRLREITSFKEAHTVHKDFEEAAEHVKKAIGFYKEFYDFLAIPYMVIRRPEWDKFPGAAYTIAFDTIMPDGRTLQIGTVHHLADNFARTFDIKYEAPNGEHYYAHQTCYGISERCIAALISVHGDDLGLVLPFEVAPVQIVIIPILYKGKEEAVMEACRKLAEKLKAFRVVLDEGEDRPGAKYYKWELKGVPIRFEIGPRDAEKGVAVVSFRDEKRKFEVPLDEVDEGKVLEWARELKQRLRNAAAERMAEKVKFVENTGEIEEWGGVVAVYLCSDEDCGHSVEEHGKSLLGWFEEVPDWLDLEPEGKCVVCGREGRLAALAKTY.

This sequence belongs to the class-II aminoacyl-tRNA synthetase family. ProS type 3 subfamily. In terms of assembly, homodimer.

It is found in the cytoplasm. It carries out the reaction tRNA(Pro) + L-proline + ATP = L-prolyl-tRNA(Pro) + AMP + diphosphate. Functionally, catalyzes the attachment of proline to tRNA(Pro) in a two-step reaction: proline is first activated by ATP to form Pro-AMP and then transferred to the acceptor end of tRNA(Pro). The chain is Proline--tRNA ligase from Archaeoglobus fulgidus (strain ATCC 49558 / DSM 4304 / JCM 9628 / NBRC 100126 / VC-16).